Reading from the N-terminus, the 424-residue chain is Imidazolonepropionase (424 aa).

Fe(3+) contacts are provided by histidine 84 and histidine 86. The Zn(2+) site is built by histidine 84 and histidine 86. 4-imidazolone-5-propanoate contacts are provided by arginine 93, tyrosine 156, and histidine 189. Residue tyrosine 156 participates in N-formimidoyl-L-glutamate binding. Histidine 254 is a binding site for Fe(3+). Histidine 254 is a Zn(2+) binding site. Glutamate 257 contacts 4-imidazolone-5-propanoate. Aspartate 328 serves as a coordination point for Fe(3+). Aspartate 328 contributes to the Zn(2+) binding site. N-formimidoyl-L-glutamate is bound by residues asparagine 330 and glycine 332. Serine 333 contacts 4-imidazolone-5-propanoate.

It belongs to the metallo-dependent hydrolases superfamily. HutI family. Requires Zn(2+) as cofactor. Fe(3+) is required as a cofactor.

Its subcellular location is the cytoplasm. It catalyses the reaction 4-imidazolone-5-propanoate + H2O = N-formimidoyl-L-glutamate. It functions in the pathway amino-acid degradation; L-histidine degradation into L-glutamate; N-formimidoyl-L-glutamate from L-histidine: step 3/3. Functionally, catalyzes the hydrolytic cleavage of the carbon-nitrogen bond in imidazolone-5-propanoate to yield N-formimidoyl-L-glutamate. It is the third step in the universal histidine degradation pathway. This Geobacillus thermodenitrificans (strain NG80-2) protein is Imidazolonepropionase.